Reading from the N-terminus, the 412-residue chain is 43 kDa receptor-associated protein of the synapse (412 aa).

Residue Gly2 is the site of N-myristoyl glycine attachment. TPR repeat units lie at residues 6 to 39, 83 to 116, 123 to 156, 163 to 196, 206 to 239, 246 to 279, and 286 to 319; these read TKQQ…SSDL, LESY…PGTR, GQVS…AHNN, CRVC…VNNY, AMSQ…ALQH, ALCL…MTEI, and VQAL…AEEV. Tyr196 carries the phosphotyrosine modification. Residues 363 to 403 form an RING-type zinc finger; it reads CGLCGESIGEKNSRLQALPCSHIFHLRCLQNNGTRSCPNCR. At Ser405 the chain carries Phosphoserine.

The protein belongs to the RAPsyn family. Ubiquitinated by the BCR(KLHL8) complex, leading to its degradation.

It is found in the cell membrane. It localises to the postsynaptic cell membrane. The protein resides in the cytoplasm. Its subcellular location is the cytoskeleton. Its function is as follows. Postsynaptic protein required for clustering of nicotinic acetylcholine receptors (nAChRs) at the neuromuscular junction. It may link the receptor to the underlying postsynaptic cytoskeleton, possibly by direct association with actin or spectrin. In Homo sapiens (Human), this protein is 43 kDa receptor-associated protein of the synapse (RAPSN).